Reading from the N-terminus, the 256-residue chain is Hydroxyacylglutathione hydrolase (256 aa).

Zn(2+) is bound by residues His-56, His-58, Asp-60, His-61, His-114, Asp-133, and His-171.

The protein belongs to the metallo-beta-lactamase superfamily. Glyoxalase II family. As to quaternary structure, monomer. Requires Zn(2+) as cofactor.

The catalysed reaction is an S-(2-hydroxyacyl)glutathione + H2O = a 2-hydroxy carboxylate + glutathione + H(+). It participates in secondary metabolite metabolism; methylglyoxal degradation; (R)-lactate from methylglyoxal: step 2/2. Functionally, thiolesterase that catalyzes the hydrolysis of S-D-lactoyl-glutathione to form glutathione and D-lactic acid. This Rhodobacter capsulatus (Rhodopseudomonas capsulata) protein is Hydroxyacylglutathione hydrolase.